We begin with the raw amino-acid sequence, 166 residues long: Lipoprotein signal peptidase (166 aa).

The next 3 membrane-spanning stretches (helical) occupy residues 12-32 (WLWLVVVVLIIDLGSKYLILQ), 70-90 (WFFAGIAIGICVILLVMMYRS), and 102-122 (ALIIGGALGNLFDRLWHGFVV). Catalysis depends on residues Asp-123 and Asp-141. A helical membrane pass occupies residues 137–157 (FNLADTAICIGAALIVLEGFL).

Belongs to the peptidase A8 family.

It localises to the cell inner membrane. The enzyme catalyses Release of signal peptides from bacterial membrane prolipoproteins. Hydrolyzes -Xaa-Yaa-Zaa-|-(S,diacylglyceryl)Cys-, in which Xaa is hydrophobic (preferably Leu), and Yaa (Ala or Ser) and Zaa (Gly or Ala) have small, neutral side chains.. It functions in the pathway protein modification; lipoprotein biosynthesis (signal peptide cleavage). Its function is as follows. This protein specifically catalyzes the removal of signal peptides from prolipoproteins. In Salmonella paratyphi A (strain ATCC 9150 / SARB42), this protein is Lipoprotein signal peptidase.